A 162-amino-acid chain; its full sequence is 3-hydroxyacyl-[acyl-carrier-protein] dehydratase FabZ (162 aa).

The active site involves His49.

It belongs to the thioester dehydratase family. FabZ subfamily.

It is found in the cytoplasm. The catalysed reaction is a (3R)-hydroxyacyl-[ACP] = a (2E)-enoyl-[ACP] + H2O. Functionally, involved in unsaturated fatty acids biosynthesis. Catalyzes the dehydration of short chain beta-hydroxyacyl-ACPs and long chain saturated and unsaturated beta-hydroxyacyl-ACPs. This is 3-hydroxyacyl-[acyl-carrier-protein] dehydratase FabZ from Solibacter usitatus (strain Ellin6076).